The chain runs to 413 residues: Alpha-1-antitrypsin-like protein CM55-SI (413 aa).

An N-terminal signal peptide occupies residues 1 to 24 (MPSSISWGLLLLAALSCLGPGSLA). Pyrrolidone carboxylic acid is present on Q25. Residues N65, N102, N165, and N266 are each glycosylated (N-linked (GlcNAc...) asparagine). Residues 368 to 387 (GGTVLGNIRSILRYEVIFDR) are RCL.

The protein belongs to the serpin family. Expressed in liver.

The sequence is that of Alpha-1-antitrypsin-like protein CM55-SI from Tamias sibiricus (Siberian chipmunk).